A 465-amino-acid chain; its full sequence is Kinesin-like protein KIN-1 (465 aa).

In terms of domain architecture, Kinesin motor spans 3–334 (NVTVCARFRP…LRFGMRAKHI (332 aa)). 87 to 94 (GQTGAGKT) contacts ATP. Positions 338 to 358 (PRASEVKSAKAQEEPSSVTKD) are disordered. Over residues 341 to 358 (SEVKSAKAQEEPSSVTKD) the composition is skewed to basic and acidic residues. Residues 402–444 (VYEDIVSKTIQSLQQAVDELQQKVKKLEAENIGIQEQALRNHE) are a coiled coil.

This sequence belongs to the TRAFAC class myosin-kinesin ATPase superfamily. Kinesin family. KIN-1 subfamily. Homodimer. Interacts with WIP1 and WIP2. As to expression, specifically expressed in ovules and anthers.

Kinesin-like motor protein that promotes synapsis and is required for proper crossover distribution in meiosis. Plays a role in the nuclear division cycles during megagametogenesis. In Arabidopsis thaliana (Mouse-ear cress), this protein is Kinesin-like protein KIN-1.